The sequence spans 173 residues: Large ribosomal subunit protein uL16 (173 aa).

The protein belongs to the universal ribosomal protein uL16 family.

The polypeptide is Large ribosomal subunit protein uL16 (Methanosphaerula palustris (strain ATCC BAA-1556 / DSM 19958 / E1-9c)).